A 736-amino-acid chain; its full sequence is NADPH--cytochrome P450 reductase (736 aa).

Position 1 (M1) is a topological domain, lumenal. A helical transmembrane segment spans residues 2-24 (AVSSSSDVIVLSVGIILAALYLF). Topologically, residues 25-736 (REQIFSAAKP…RNRLLLDVWS (712 aa)) are cytoplasmic. A Flavodoxin-like domain is found at 66 to 216 (IVIFYGSQTG…DYLEWKDGMW (151 aa)). FMN-binding positions include 72–77 (SQTGTA), 123–126 (ATYG), 165–174 (LGNKTYEHYN), and D200. Residues 269–546 (KNPYPAPIIA…EGPRGAYKQG (278 aa)) enclose the FAD-binding FR-type domain. R289 provides a ligand contact to NADP(+). FAD-binding positions include 456 to 459 (RYYS), 474 to 476 (TVV), Y480, and 495 to 498 (GVGS). Residues T577, 648–649 (SR), and 659–663 (KIYVQ) contribute to the NADP(+) site. FAD is bound at residue W735.

It belongs to the NADPH--cytochrome P450 reductase family. The protein in the N-terminal section; belongs to the flavodoxin family. In the C-terminal section; belongs to the flavoprotein pyridine nucleotide cytochrome reductase family. FAD is required as a cofactor. FMN serves as cofactor.

It localises to the endoplasmic reticulum membrane. Its subcellular location is the mitochondrion outer membrane. It is found in the cell membrane. The catalysed reaction is 2 oxidized [cytochrome P450] + NADPH = 2 reduced [cytochrome P450] + NADP(+) + H(+). This enzyme is required for electron transfer from NADP to cytochrome P450 in microsomes. It can also provide electron transfer to heme oxygenase and cytochrome B5. Involved in ergosterol biosynthesis. The protein is NADPH--cytochrome P450 reductase (CPR) of Phanerodontia chrysosporium (White-rot fungus).